Reading from the N-terminus, the 128-residue chain is uncharacterized protein (128 aa).

This is an uncharacterized protein from Haemophilus influenzae (strain ATCC 51907 / DSM 11121 / KW20 / Rd).